The primary structure comprises 108 residues: Hydrogenase expression/formation protein HupN (108 aa).

Residues 88–108 are disordered; the sequence is REPQLPPHLQAQLPPKEPNSP.

This sequence belongs to the HupF/HypC family.

The polypeptide is Hydrogenase expression/formation protein HupN (hupN) (Azotobacter chroococcum mcd 1).